Reading from the N-terminus, the 244-residue chain is Troponin I, cardiac muscle (244 aa).

Over residues 1 to 25 (MSDEEEVTYEEEEEEYVEEEEEEVV) the composition is skewed to acidic residues. A disordered region spans residues 1 to 67 (MSDEEEVTYE…PQVKRKPKIS (67 aa)). At serine 2 the chain carries N-acetylserine. At serine 2 the chain carries Phosphoserine; by CK2. Pro residues predominate over residues 27–42 (PEPPKPAPPPAAPPPL).

This sequence belongs to the troponin I family. Binds to actin and tropomyosin. Heart.

Its function is as follows. Troponin I is the inhibitory subunit of troponin, the thin filament regulatory complex which confers calcium-sensitivity to striated muscle actomyosin ATPase activity. In Xenopus laevis (African clawed frog), this protein is Troponin I, cardiac muscle (tnni3).